A 175-amino-acid polypeptide reads, in one-letter code: Small ribosomal subunit protein uS5 (175 aa).

An S5 DRBM domain is found at 19–82 (WVDRLVSVNR…DDAKKNVIRV (64 aa)).

Belongs to the universal ribosomal protein uS5 family. In terms of assembly, part of the 30S ribosomal subunit. Contacts proteins S4 and S8.

With S4 and S12 plays an important role in translational accuracy. Functionally, located at the back of the 30S subunit body where it stabilizes the conformation of the head with respect to the body. The sequence is that of Small ribosomal subunit protein uS5 from Salinibacter ruber (strain DSM 13855 / M31).